A 152-amino-acid chain; its full sequence is FMN reductase (NADH) RutF (152 aa).

Belongs to the non-flavoprotein flavin reductase family. RutF subfamily.

The catalysed reaction is FMNH2 + NAD(+) = FMN + NADH + 2 H(+). Catalyzes the reduction of FMN to FMNH2 which is used to reduce pyrimidine by RutA via the Rut pathway. The sequence is that of FMN reductase (NADH) RutF from Shigella flexneri.